A 175-amino-acid polypeptide reads, in one-letter code: uncharacterized protein (175 aa).

This is an uncharacterized protein from Enterobacteria phage T4 (Bacteriophage T4).